Consider the following 264-residue polypeptide: tRNA pseudouridine synthase A (264 aa).

Asp51 acts as the Nucleophile in catalysis. Residue Tyr109 participates in substrate binding.

Belongs to the tRNA pseudouridine synthase TruA family. Homodimer.

The enzyme catalyses uridine(38/39/40) in tRNA = pseudouridine(38/39/40) in tRNA. Its function is as follows. Formation of pseudouridine at positions 38, 39 and 40 in the anticodon stem and loop of transfer RNAs. The chain is tRNA pseudouridine synthase A from Pasteurella multocida (strain Pm70).